The sequence spans 1117 residues: MAGLQQGCHFEGQNWTAPHWKTCLPCQGPWRLTVSHLKTVSSISVLSVVFWSVLLWADSLSLLAWARETFTLGVLGPWDCDPIFAQALPSIATQLAVDQVNQDASLLPGSQLDFKVLPTGCDTPHALATFVAHKNIVAAFVGPVNPGFCSAAALLAQGWGKSLFSWACEAPEGGGDLVPTLPSAADVLLSVMRHFGWARWAIVSSHQDIWVTTAQQLATAFRTHGLPIGLVTSLGPGEKGATEVCKQLHSVHGLKIVVLCMHSALLGGLEQTTLLHCAWEEGLTDGRLVFLPYDTLLFALPYGNRSYLVLDDHGPLQEAYDAVLTVSLESSPESHAFTATEMSGGATANLEPEQVSPLFGTIYDAVILLAHALNRSETHGAGLSGAHLGDHVRALDVAGFSQRIRTDGKGRRLAQYVILDTDGEGSQLVPTHILDTSTWQVQPLGKPIHFPGGSPPAHDASCWFDPNTLCIRGVQPLGSLLTLTIACVLALVGGFLAYFIRLGLQQLRLLRGPHRILLTSQELTFLQRTPSRRRPHVDSGSESRSVVDGGSPRSVTQGSARSLPAFLEHTNVALYQGEWVWLKKFEAGVAPDLRPSSLSFLRKLREMRHENVTAFLGLFVGPGVSAMVLEHCARGSLEDLLQNENLRLDWTFKASLLLDLIRGLRYLHHRRFPHGRLKSRNCVVDTRFVLKITDHGYAEFLESHCSSRPQPAPEELLWTAPELLRGPGKATFKGDVFSLAIILQEVLTRDPPYCSWGLSAEEIIRKVASPPPLCRPLVSPDQGPLECIQLMQLCWEEAPDDRPSLDQIYTQFKSINQGKKTSVVDSMLRMLEKYSESLEDLVQERTEELELERRKTERLLSQMLPPSVAHALKMGTTVEPEYFDQVTIYFSDIVGFTTISALSEPIEVVGFLNDLYTLFDAVLDSHDVYKVETIGDAYMVASGLPRRNGNRHAAEIANLALDILSYAGNFRMRHAPDVPIRVRAGLHSGPCVAGVVGLTMPRYCLFGDTVNTASRMESTGLPYRIHVSQSTVQALLSLDEGYKIDVRGQTELKGKGLEETYWLTGKVGFCRPLPTPLSIKPGDPWQDRINQEIRTGFAKARQGLAEPRKSGEAGPGP.

The N-terminal stretch at 1–66 (MAGLQQGCHF…ADSLSLLAWA (66 aa)) is a signal peptide. Over 67–479 (RETFTLGVLG…CIRGVQPLGS (413 aa)) the chain is Extracellular. C121 and C149 are joined by a disulfide. The helical transmembrane segment at 480-500 (LLTLTIACVLALVGGFLAYFI) threads the bilayer. Residues 501–1117 (RLGLQQLRLL…RKSGEAGPGP (617 aa)) are Cytoplasmic-facing. The segment at 529–557 (TPSRRRPHVDSGSESRSVVDGGSPRSVTQ) is disordered. The Protein kinase domain occupies 541–812 (SESRSVVDGG…PSLDQIYTQF (272 aa)). The interval 874-915 (MGTTVEPEYFDQVTIYFSDIVGFTTISALSEPIEVVGFLNDL) is interaction with NCALD. In terms of domain architecture, Guanylate cyclase spans 887-1017 (TIYFSDIVGF…DTVNTASRME (131 aa)). Residues 1096–1117 (GFAKARQGLAEPRKSGEAGPGP) are disordered.

It belongs to the adenylyl cyclase class-4/guanylyl cyclase family. As to quaternary structure, interacts (via the catalytic domain) with NCALD. As to expression, found in a subset of olfactory neurons in the main olfactory epithelium.

It is found in the cell projection. Its subcellular location is the cilium membrane. The enzyme catalyses GTP = 3',5'-cyclic GMP + diphosphate. Activated by Ca(2+). Functionally, functions as an olfactory receptor activated by urine odorants, uroguanylin and guanylin and as well by the volatile semiochemicals carbon disulfide (CS2) and carbon dioxide (CO2). Has guanylate cyclase activity upon binding of the ligand. Activation of GUCY2D neurons leads to the cGMP-dependent activation of the CNGA3 channels, membrane depolarization and an increase in action potential frequency. Signaling pathways activated by GUCY2D may trigger social behaviors such as acquisition of food preference. The sequence is that of Guanylate cyclase D from Mus musculus (Mouse).